A 300-amino-acid polypeptide reads, in one-letter code: Tyrosine recombinase XerC (300 aa).

A Core-binding (CB) domain is found at 2–88; sequence TQEGKLEQQF…SLRSFYTFLL (87 aa). A Tyr recombinase domain is found at 109-294; it reads RLPKFFYSEE…TKEHLKSTYM (186 aa). Active-site residues include Arg-150, Lys-174, His-246, Arg-249, and His-272. The O-(3'-phospho-DNA)-tyrosine intermediate role is filled by Tyr-281.

Belongs to the 'phage' integrase family. XerC subfamily. Forms a cyclic heterotetrameric complex composed of two molecules of XerC and two molecules of XerD.

The protein localises to the cytoplasm. Its function is as follows. Site-specific tyrosine recombinase, which acts by catalyzing the cutting and rejoining of the recombining DNA molecules. The XerC-XerD complex is essential to convert dimers of the bacterial chromosome into monomers to permit their segregation at cell division. It also contributes to the segregational stability of plasmids. This chain is Tyrosine recombinase XerC, found in Listeria welshimeri serovar 6b (strain ATCC 35897 / DSM 20650 / CCUG 15529 / CIP 8149 / NCTC 11857 / SLCC 5334 / V8).